Reading from the N-terminus, the 343-residue chain is Protein RecA (343 aa).

An ATP-binding site is contributed by 66 to 73 (GPESSGKT).

The protein belongs to the RecA family.

It localises to the cytoplasm. Its function is as follows. Can catalyze the hydrolysis of ATP in the presence of single-stranded DNA, the ATP-dependent uptake of single-stranded DNA by duplex DNA, and the ATP-dependent hybridization of homologous single-stranded DNAs. It interacts with LexA causing its activation and leading to its autocatalytic cleavage. This Rickettsia bellii (strain OSU 85-389) protein is Protein RecA.